Reading from the N-terminus, the 461-residue chain is Serine/threonine-protein kinase 4 homolog A (461 aa).

A Protein kinase domain is found at 20–273 (FTIVEKLGEG…AEELLKHPFI (254 aa)). ATP-binding positions include 26–34 (LGEGSYGSV) and Lys49. Asp139 serves as the catalytic Proton acceptor. Phosphothreonine; by autocatalysis is present on Thr173. 2 disordered regions span residues 303-349 (GIEQ…EEYD) and 369-388 (NDDEDSGTMKLKNTMPSNKK). The segment covering 307–322 (RDEEEEDEDEDSEDSD) has biased composition (acidic residues). An SARAH domain is found at 411–458 (SDKYSSYSLEELKKMLAELEIEREKEVQKTLEKFSINRQALLAVIDEK).

This sequence belongs to the protein kinase superfamily. STE Ser/Thr protein kinase family. STE20 subfamily. Mn(2+) is required as a cofactor. In terms of processing, undergoes autophosphorylation in the catalytic domain.

Its subcellular location is the cytoplasm. The protein localises to the cytosol. The enzyme catalyses L-seryl-[protein] + ATP = O-phospho-L-seryl-[protein] + ADP + H(+). The catalysed reaction is L-threonyl-[protein] + ATP = O-phospho-L-threonyl-[protein] + ADP + H(+). Functionally, regulates both cAMP signaling during early development and the stress response. Functions as an activator of adenylylcyclase. This chain is Serine/threonine-protein kinase 4 homolog A (krsA), found in Dictyostelium discoideum (Social amoeba).